We begin with the raw amino-acid sequence, 155 residues long: Calmodulin, flagellar (155 aa).

4 EF-hand domains span residues 14 to 49 (EQIA…LGQN), 50 to 85 (PTEA…KMKD), 87 to 122 (DNEE…LGEK), and 123 to 155 (LTDE…MMQK). Ca(2+) contacts are provided by D27, D29, D31, T33, E38, D63, D65, N67, T69, E74, D100, D102, N104, E111, D136, D138, D140, Q142, and E147.

It belongs to the calmodulin family.

It localises to the cell projection. Its subcellular location is the cilium. The protein resides in the flagellum. Calmodulin mediates the control of a large number of enzymes, ion channels and other proteins by Ca(2+). Among the enzymes to be stimulated by the calmodulin-Ca(2+) complex are a number of protein kinases and phosphatases. This is Calmodulin, flagellar (CAM1) from Naegleria gruberi (Amoeba).